The sequence spans 106 residues: MSKLHIKKGDTVYVNAGEDKGKTGRVLKVLVKEGRAIVEGINMVSKSTKPNAKNPQGGIVKQEAPIHISNLNPVDPKTGKATRVGRKVSSEGTLVRYSKKSGEEIK.

A disordered region spans residues S69–K106.

It belongs to the universal ribosomal protein uL24 family. In terms of assembly, part of the 50S ribosomal subunit.

In terms of biological role, one of two assembly initiator proteins, it binds directly to the 5'-end of the 23S rRNA, where it nucleates assembly of the 50S subunit. Functionally, one of the proteins that surrounds the polypeptide exit tunnel on the outside of the subunit. The polypeptide is Large ribosomal subunit protein uL24 (Bacteroides fragilis (strain ATCC 25285 / DSM 2151 / CCUG 4856 / JCM 11019 / LMG 10263 / NCTC 9343 / Onslow / VPI 2553 / EN-2)).